Here is an 84-residue protein sequence, read N- to C-terminus: uncharacterized protein (84 aa).

The segment at 62–84 (GYATKKDTMRMSAQKRTTKRLKP) is disordered.

This is an uncharacterized protein from Soybean chlorotic mottle virus.